A 112-amino-acid polypeptide reads, in one-letter code: Thioredoxin (112 aa).

In terms of domain architecture, Thioredoxin spans Ser-2 to Leu-112. The cysteines at positions 35 and 38 are disulfide-linked.

It belongs to the thioredoxin family.

Functionally, participates in various redox reactions through the reversible oxidation of its active center dithiol to a disulfide and catalyzes dithiol-disulfide exchange reactions. In Mycolicibacterium smegmatis (Mycobacterium smegmatis), this protein is Thioredoxin (trxA).